The following is a 379-amino-acid chain: Succinyl-diaminopimelate desuccinylase (379 aa).

Residue His-70 participates in Zn(2+) binding. Asp-72 is an active-site residue. A Zn(2+)-binding site is contributed by Asp-103. Glu-137 serves as the catalytic Proton acceptor. Zn(2+) contacts are provided by Glu-138, Glu-166, and His-352.

Belongs to the peptidase M20A family. DapE subfamily. Homodimer. The cofactor is Zn(2+). Requires Co(2+) as cofactor.

It carries out the reaction N-succinyl-(2S,6S)-2,6-diaminopimelate + H2O = (2S,6S)-2,6-diaminopimelate + succinate. The protein operates within amino-acid biosynthesis; L-lysine biosynthesis via DAP pathway; LL-2,6-diaminopimelate from (S)-tetrahydrodipicolinate (succinylase route): step 3/3. In terms of biological role, catalyzes the hydrolysis of N-succinyl-L,L-diaminopimelic acid (SDAP), forming succinate and LL-2,6-diaminopimelate (DAP), an intermediate involved in the bacterial biosynthesis of lysine and meso-diaminopimelic acid, an essential component of bacterial cell walls. The sequence is that of Succinyl-diaminopimelate desuccinylase from Shewanella putrefaciens (strain CN-32 / ATCC BAA-453).